A 1434-amino-acid polypeptide reads, in one-letter code: DNA-directed RNA polymerase subunit beta (1434 aa).

It belongs to the RNA polymerase beta chain family. In terms of assembly, the RNAP catalytic core consists of 2 alpha, 1 beta, 1 beta' and 1 omega subunit. When a sigma factor is associated with the core the holoenzyme is formed, which can initiate transcription.

It carries out the reaction RNA(n) + a ribonucleoside 5'-triphosphate = RNA(n+1) + diphosphate. In terms of biological role, DNA-dependent RNA polymerase catalyzes the transcription of DNA into RNA using the four ribonucleoside triphosphates as substrates. The protein is DNA-directed RNA polymerase subunit beta of Ureaplasma parvum serovar 3 (strain ATCC 27815 / 27 / NCTC 11736).